The sequence spans 322 residues: Lignin-forming anionic peroxidase (322 aa).

The N-terminal stretch at 1–27 is a signal peptide; the sequence is MNTPTQSFRAKAAIFSLLLLSCMQCHA. A Pyrrolidone carboxylic acid modification is found at glutamine 28. 4 disulfide bridges follow: cysteine 38/cysteine 118, cysteine 71/cysteine 76, cysteine 124/cysteine 318, and cysteine 203/cysteine 229. The active-site Proton acceptor is histidine 69. 5 residues coordinate Ca(2+): aspartate 70, valine 73, glycine 75, aspartate 77, and serine 79. Residue proline 166 coordinates substrate. Histidine 196 is a binding site for heme b. Threonine 197 provides a ligand contact to Ca(2+). An N-linked (GlcNAc...) asparagine glycan is attached at asparagine 213. Residues aspartate 242, threonine 245, and aspartate 250 each contribute to the Ca(2+) site.

This sequence belongs to the peroxidase family. Classical plant (class III) peroxidase subfamily. It depends on Ca(2+) as a cofactor. The cofactor is heme b. In terms of tissue distribution, mesophyll protoplasts and to a much lesser extent, roots and germinating seeds.

It is found in the secreted. It catalyses the reaction 2 a phenolic donor + H2O2 = 2 a phenolic radical donor + 2 H2O. Its function is as follows. Removal of H(2)O(2), oxidation of toxic reductants, biosynthesis and degradation of lignin, suberization, auxin catabolism, response to environmental stresses such as wounding, pathogen attack and oxidative stress. These functions might be dependent on each isozyme/isoform in each plant tissue. In terms of biological role, plays an integral role in secondary cell wall biosynthesis by the polymerization of cinnamyl alcohols into lignin and by forming rigid cross-links between cellulose, pectin, hydroxy-proline-rich glycoproteins, and lignin. In Nicotiana sylvestris (Wood tobacco), this protein is Lignin-forming anionic peroxidase.